We begin with the raw amino-acid sequence, 175 residues long: Disulfide bond formation protein B (175 aa).

Topologically, residues 1-13 (MTALTRFAHSRSS) are cytoplasmic. The chain crosses the membrane as a helical span at residues 14 to 30 (WFLLTGTAIGLEAAALY). The Periplasmic segment spans residues 31-48 (FQYVMKLDPCVMCIYQRL). Residues C40 and C43 are joined by a disulfide bond. A helical transmembrane segment spans residues 49–64 (AVFGILVAGLIGMTAP). Over 65 to 71 (KYRLIRI) the chain is Cytoplasmic. The helical transmembrane segment at 72 to 89 (LGASCWAVSATWGLKLAL) threads the bilayer. Topologically, residues 90–144 (ALVNMQNNPSPFATCSFLPEFPTWMPLHEWFPAVMLPTGMCTDLPWRFMDVTMAE) are periplasmic. C104 and C130 are joined by a disulfide. The chain crosses the membrane as a helical span at residues 145–163 (WMVVVFSTFLVIWLLFIVP). The Cytoplasmic portion of the chain corresponds to 164–175 (ILSGSTKPSLYK).

It belongs to the DsbB family.

The protein localises to the cell inner membrane. In terms of biological role, required for disulfide bond formation in some periplasmic proteins. Acts by oxidizing the DsbA protein. The polypeptide is Disulfide bond formation protein B (Shewanella sp. (strain W3-18-1)).